The sequence spans 424 residues: MAKNIQAIRGMNDYLPGETAIWQRIEGTLKNVLGSYGYSEIRLPIVEQTPLFKRAIGEVTDVVEKEMYTFEDRNGDSLTLRPEGTAGCVRAGIEHGLLYNQEQRLWYIGPMFRHERPQKGRYRQFHQLGAEVFGLQGPDIDAELIMLTARWWRALGISEHVSLELNSIGSLEARANYRDALVAFLEQHQETLDEDCKRRMYTNPLRVLDSKNPDVQALLNDAPVLGDYLDDDSREHFAGLCKLLDAAGIAYTVNQRLVRGLDYYNRTVFEWVTNSLGSQGTVCAGGRYDGLVEQLGGRATPAVGFAMGLERLVLLVQAVNPEFIASPVVDIYLVAAGAQTQSAAMTLAERLRDEMPGVKLMTNHGGGNFKKQFARADKWGARIALVLGESEVADGTVVVKDLRSGEQTAVAQDSVAAHLRTLLG.

The protein belongs to the class-II aminoacyl-tRNA synthetase family. As to quaternary structure, homodimer.

It localises to the cytoplasm. It catalyses the reaction tRNA(His) + L-histidine + ATP = L-histidyl-tRNA(His) + AMP + diphosphate + H(+). The polypeptide is Histidine--tRNA ligase (Salmonella typhi).